A 379-amino-acid chain; its full sequence is Chaperone protein DnaJ (379 aa).

Residues 5–70 (DYYETLGCDR…QKRAAYDRFG (66 aa)) form the J domain. The segment at 134–212 (GKTAQIKIPT…CGGAGRVTRE (79 aa)) adopts a CR-type zinc-finger fold. Zn(2+) contacts are provided by Cys147, Cys150, Cys164, Cys167, Cys186, Cys189, Cys200, and Cys203. CXXCXGXG motif repeat units follow at residues 147–154 (CETCSGTG), 164–171 (CRMCGGAG), 186–193 (CPNCQGRG), and 200–207 (CSDCGGAG).

It belongs to the DnaJ family. In terms of assembly, homodimer. The cofactor is Zn(2+).

The protein resides in the cytoplasm. Functionally, participates actively in the response to hyperosmotic and heat shock by preventing the aggregation of stress-denatured proteins and by disaggregating proteins, also in an autonomous, DnaK-independent fashion. Unfolded proteins bind initially to DnaJ; upon interaction with the DnaJ-bound protein, DnaK hydrolyzes its bound ATP, resulting in the formation of a stable complex. GrpE releases ADP from DnaK; ATP binding to DnaK triggers the release of the substrate protein, thus completing the reaction cycle. Several rounds of ATP-dependent interactions between DnaJ, DnaK and GrpE are required for fully efficient folding. Also involved, together with DnaK and GrpE, in the DNA replication of plasmids through activation of initiation proteins. The chain is Chaperone protein DnaJ from Xanthobacter autotrophicus (strain ATCC BAA-1158 / Py2).